The primary structure comprises 154 residues: Ribonuclease H (154 aa).

The 142-residue stretch at 1 to 142 folds into the RNase H type-1 domain; it reads MLKHIDLYTD…CDELARDAAS (142 aa). The Mg(2+) site is built by D10, E48, D70, and D134. The segment covering 126 to 147 has biased composition (basic and acidic residues); it reads GHPENERCDELARDAASGKELA. Residues 126 to 154 are disordered; that stretch reads GHPENERCDELARDAASGKELAEDTGYQP.

It belongs to the RNase H family. In terms of assembly, monomer. The cofactor is Mg(2+).

It is found in the cytoplasm. It catalyses the reaction Endonucleolytic cleavage to 5'-phosphomonoester.. Functionally, endonuclease that specifically degrades the RNA of RNA-DNA hybrids. This chain is Ribonuclease H, found in Aeromonas salmonicida (strain A449).